We begin with the raw amino-acid sequence, 104 residues long: Iron-sulfur cluster assembly protein CyaY (104 aa).

Belongs to the frataxin family.

In terms of biological role, involved in iron-sulfur (Fe-S) cluster assembly. May act as a regulator of Fe-S biogenesis. This chain is Iron-sulfur cluster assembly protein CyaY, found in Vibrio atlanticus (strain LGP32) (Vibrio splendidus (strain Mel32)).